The chain runs to 1168 residues: DNA-directed RNA polymerase subunit beta (1168 aa).

It belongs to the RNA polymerase beta chain family. In terms of assembly, the RNAP catalytic core consists of 2 alpha, 1 beta, 1 beta' and 1 omega subunit. When a sigma factor is associated with the core the holoenzyme is formed, which can initiate transcription.

The catalysed reaction is RNA(n) + a ribonucleoside 5'-triphosphate = RNA(n+1) + diphosphate. Functionally, DNA-dependent RNA polymerase catalyzes the transcription of DNA into RNA using the four ribonucleoside triphosphates as substrates. The chain is DNA-directed RNA polymerase subunit beta from Rhodococcus opacus (strain B4).